Here is a 354-residue protein sequence, read N- to C-terminus: Squamosa promoter-binding-like protein 15 (354 aa).

Residues 1–25 (MELLMCSGQAESGGSSSTESSSLSG) form a disordered region. A compositionally biased stretch (low complexity) spans 7 to 25 (SGQAESGGSSSTESSSLSG). The SBP-type zinc finger occupies 56-133 (TARCQVEGCR…ACHNERRRKP (78 aa)). Positions 59, 64, 81, 84, 100, 103, 107, and 119 each coordinate Zn(2+). The Bipartite nuclear localization signal signature appears at 116-132 (KRSCRRRLACHNERRRK).

Requires Zn(2+) as cofactor.

The protein localises to the nucleus. In terms of biological role, trans-acting factor that binds specifically to the consensus nucleotide sequence 5'-TNCGTACAA-3'. The polypeptide is Squamosa promoter-binding-like protein 15 (SPL15) (Arabidopsis thaliana (Mouse-ear cress)).